The chain runs to 515 residues: MAEQVALSRTQVCGILREELFQGDAFHQSDTHIFIIMGASGDLAKKKIYPTIWWLFRDGLLPENTFIVGYARSRLTVADIRKQSEPFFKATPEEKLKLEDFFARNSYVAGQYDDAASYQRLNSHMNALHLGSQANRLFYLALPPTVYEAVTKNIHESCMSQIGWNRIIVEKPFGRDLQSSDRLSNHISSLFREDQIYRIDHYLGKEMVQNLMVLRFANRIFGPIWNRDNIACVILTFKEPFGTEGRGGYFDEFGIIRDVMQNHLLQMLCLVAMEKPASTNSDDVRDEKVKVLKCISEVQANNVVLGQYVGNPDGEGEATKGYLDDPTVPRGSTTATFAAVVLYVENERWDGVPFILRCGKALNERKAEVRLQFHDVAGDIFHQQCKRNELVIRVQPNEAVYTKMMTKKPGMFFNPEESELDLTYGNRYKNVKLPDAYERLILDVFCGSQMHFVRSDELREAWRIFTPLLHQIELEKPKPIPYIYGSRGPTEADELMKRVGFQYEGTYKWVNPHKL.

Alanine 2 is modified (N-acetylalanine). Serine 8 is modified (phosphoserine). Threonine 10 bears the Phosphothreonine mark. Position 26 is a phosphoserine (phenylalanine 26). NADP(+)-binding positions include 38-45 (GASGDLAK) and arginine 72. N6-acetyllysine is present on lysine 89. NADP(+) is bound by residues tyrosine 147 and lysine 171. D-glucose 6-phosphate contacts are provided by residues lysine 171, 201-205 (HYLGK), glutamate 239, and aspartate 258. Residue lysine 171 is modified to N6-(2-hydroxyisobutyryl)lysine; alternate. Lysine 171 is modified (N6-acetyllysine; alternate). Histidine 263 functions as the Proton acceptor in the catalytic mechanism. Arginine 357 contacts NADP(+). D-glucose 6-phosphate is bound by residues lysine 360 and arginine 365. NADP(+) contacts are provided by lysine 366, arginine 370, and arginine 393. Position 395 (glutamine 395) interacts with D-glucose 6-phosphate. NADP(+)-binding positions include 401 to 403 (YTK) and 421 to 423 (DLT). Lysine 403 is subject to N6-acetyllysine. An N6-acetyllysine modification is found at lysine 432. Arginine 487 is a binding site for NADP(+). Residue lysine 497 is modified to N6-acetyllysine. Residues tyrosine 503 and tryptophan 509 each contribute to the NADP(+) site. Tyrosine 503 carries the post-translational modification Phosphotyrosine.

It belongs to the glucose-6-phosphate dehydrogenase family. As to quaternary structure, homotetramer; dimer of dimers. Interacts with SIRT2; the interaction is enhanced by H(2)O(2) treatment. Forms a ternary complex with ALDOB and TP53; this interaction is direct. ALDOB stabilizes the complex inhibiting G6PD activity and keeping oxidative pentose phosphate metabolism in check. Post-translationally, acetylated by ELP3 at Lys-403; acetylation inhibits its homodimerization and enzyme activity. Deacetylated by SIRT2 at Lys-403; deacetylation stimulates its enzyme activity. In terms of tissue distribution, isoform Long is found in lymphoblasts, granulocytes and sperm.

Its subcellular location is the cytoplasm. The protein localises to the cytosol. It localises to the membrane. It catalyses the reaction D-glucose 6-phosphate + NADP(+) = 6-phospho-D-glucono-1,5-lactone + NADPH + H(+). The protein operates within carbohydrate degradation; pentose phosphate pathway; D-ribulose 5-phosphate from D-glucose 6-phosphate (oxidative stage): step 1/3. Functionally, catalyzes the rate-limiting step of the oxidative pentose-phosphate pathway, which represents a route for the dissimilation of carbohydrates besides glycolysis. The main function of this enzyme is to provide reducing power (NADPH) and pentose phosphates for fatty acid and nucleic acid synthesis. The chain is Glucose-6-phosphate 1-dehydrogenase (G6PD) from Homo sapiens (Human).